Consider the following 190-residue polypeptide: Potassium-transporting ATPase KdpC subunit (190 aa).

Residues 10–30 (LLVFLTILTGGVYPLATTVLG) form a helical membrane-spanning segment.

It belongs to the KdpC family. The system is composed of three essential subunits: KdpA, KdpB and KdpC.

The protein resides in the cell inner membrane. Functionally, part of the high-affinity ATP-driven potassium transport (or Kdp) system, which catalyzes the hydrolysis of ATP coupled with the electrogenic transport of potassium into the cytoplasm. This subunit acts as a catalytic chaperone that increases the ATP-binding affinity of the ATP-hydrolyzing subunit KdpB by the formation of a transient KdpB/KdpC/ATP ternary complex. The chain is Potassium-transporting ATPase KdpC subunit from Cronobacter sakazakii (strain ATCC BAA-894) (Enterobacter sakazakii).